Consider the following 80-residue polypeptide: uncharacterized protein (80 aa).

An N-terminal signal peptide occupies residues 1–20 (MVAADHRALGSNKSYPASQT). The interval 1–21 (MVAADHRALGSNKSYPASQTA) is disordered. The span at 11–21 (SNKSYPASQTA) shows a compositional bias: polar residues.

This is an uncharacterized protein from Mycobacterium tuberculosis (strain CDC 1551 / Oshkosh).